The following is a 286-amino-acid chain: Beta-lactamase SHV-3 (286 aa).

Positions 1 to 21 (MRYIRLCIISLLATLPLAVHA) are cleaved as a signal peptide. Ser66 serves as the catalytic Acyl-ester intermediate. Cysteines 73 and 119 form a disulfide. Glu164 functions as the Proton acceptor in the catalytic mechanism. Residue 230 to 232 (KTG) participates in substrate binding.

It belongs to the class-A beta-lactamase family.

It catalyses the reaction a beta-lactam + H2O = a substituted beta-amino acid. In terms of biological role, this enzyme hydrolyzes cefotaxime, ceftazidime and other broad spectrum cephalosporins. In Klebsiella pneumoniae, this protein is Beta-lactamase SHV-3 (bla).